The primary structure comprises 225 residues: Thymidylate kinase (225 aa).

10 to 17 (GGEGAGKT) is a binding site for ATP.

This sequence belongs to the thymidylate kinase family.

The catalysed reaction is dTMP + ATP = dTDP + ADP. Functionally, phosphorylation of dTMP to form dTDP in both de novo and salvage pathways of dTTP synthesis. In Oceanobacillus iheyensis (strain DSM 14371 / CIP 107618 / JCM 11309 / KCTC 3954 / HTE831), this protein is Thymidylate kinase.